The primary structure comprises 409 residues: Peptidase T (409 aa).

Histidine 78 lines the Zn(2+) pocket. Aspartate 80 is an active-site residue. Aspartate 140 provides a ligand contact to Zn(2+). Glutamate 173 functions as the Proton acceptor in the catalytic mechanism. Zn(2+)-binding residues include glutamate 174, aspartate 196, and histidine 379.

This sequence belongs to the peptidase M20B family. Requires Zn(2+) as cofactor.

Its subcellular location is the cytoplasm. The enzyme catalyses Release of the N-terminal residue from a tripeptide.. In terms of biological role, cleaves the N-terminal amino acid of tripeptides. This Salmonella heidelberg (strain SL476) protein is Peptidase T.